The following is a 216-amino-acid chain: V-type ATP synthase subunit D (216 aa).

It belongs to the V-ATPase D subunit family.

In terms of biological role, produces ATP from ADP in the presence of a proton gradient across the membrane. This Clostridium novyi (strain NT) protein is V-type ATP synthase subunit D.